The following is a 103-amino-acid chain: G0/G1 switch protein 2 (103 aa).

Directly interacts with BCL2; this interaction prevents the formation of the anti-apoptotic BAX-BCL2 complex.

The protein resides in the mitochondrion. Its function is as follows. Promotes apoptosis by binding to BCL2, hence preventing the formation of protective BCL2-BAX heterodimers. The chain is G0/G1 switch protein 2 (G0s2) from Mus musculus (Mouse).